We begin with the raw amino-acid sequence, 215 residues long: Pyrophosphate-energized proton pump 2 (215 aa).

5 consecutive transmembrane segments (helical) span residues 16 to 36 (VYPLAICGACILTSIAGTFFV), 51 to 71 (GLIATGVFSVAGLAVATYATV), 86 to 106 (GTNLFFCGLVGLVVTALIVVI), 136 to 156 (GLAVSLESTALPAIVIVGGII), and 164 to 184 (LFGTGIAVTAMLGLAGMIVAL).

Belongs to the H(+)-translocating pyrophosphatase (TC 3.A.10) family. In terms of assembly, homodimer. Requires Mg(2+) as cofactor.

The protein localises to the cell inner membrane. It catalyses the reaction diphosphate + H2O + H(+)(in) = 2 phosphate + 2 H(+)(out). Proton pump that utilizes the energy of pyrophosphate hydrolysis as the driving force for proton movement across the membrane. Generates a proton motive force. This is Pyrophosphate-energized proton pump 2 (hppA2) from Rhizobium leguminosarum bv. trifolii.